The following is a 378-amino-acid chain: Branched-chain-amino-acid aminotransferase (378 aa).

Lysine 213 is modified (N6-(pyridoxal phosphate)lysine).

It belongs to the class-IV pyridoxal-phosphate-dependent aminotransferase family. As to quaternary structure, homodimer. It depends on pyridoxal 5'-phosphate as a cofactor.

It catalyses the reaction L-leucine + 2-oxoglutarate = 4-methyl-2-oxopentanoate + L-glutamate. The enzyme catalyses L-isoleucine + 2-oxoglutarate = (S)-3-methyl-2-oxopentanoate + L-glutamate. It carries out the reaction L-valine + 2-oxoglutarate = 3-methyl-2-oxobutanoate + L-glutamate. Catalyzes the first reaction in the catabolism of the essential branched chain amino acids leucine, isoleucine, and valine. The polypeptide is Branched-chain-amino-acid aminotransferase (bcaA) (Dictyostelium discoideum (Social amoeba)).